The sequence spans 92 residues: UPF0250 protein VP0718 (92 aa).

It belongs to the UPF0250 family.

The sequence is that of UPF0250 protein VP0718 from Vibrio parahaemolyticus serotype O3:K6 (strain RIMD 2210633).